A 185-amino-acid polypeptide reads, in one-letter code: Lactoylglutathione lyase (185 aa).

Residues 1 to 21 (MASEAKESPANNPGLSTVRDE) are disordered. The 148-residue stretch at 27–174 (IMQQTMFRVK…DGYWIEIFDL (148 aa)) folds into the VOC domain. Substrate is bound by residues Q30 and R34. Q30 contributes to the Zn(2+) binding site. Zn(2+) is bound at residue E96. Residues N100, R120, H124, and 154–155 (KM) contribute to the substrate site. H124 contacts Zn(2+). E170 is a binding site for Zn(2+). The active-site Proton donor/acceptor is E170.

Belongs to the glyoxalase I family. It depends on Zn(2+) as a cofactor.

It catalyses the reaction (R)-S-lactoylglutathione = methylglyoxal + glutathione. It functions in the pathway secondary metabolite metabolism; methylglyoxal degradation; (R)-lactate from methylglyoxal: step 1/2. Catalyzes the conversion of hemimercaptal, formed from methylglyoxal and glutathione, to S-lactoylglutathione. In Brassica juncea (Indian mustard), this protein is Lactoylglutathione lyase (GLY I).